The following is a 956-amino-acid chain: Translation initiation factor IF-2 (956 aa).

Residues 50–351 are disordered; the sequence is FPADSGGAAN…APSIGGVQVP (302 aa). Positions 64–95 are enriched in pro residues; that stretch reads APKPARAPKPAPKAAPAPPVEEAPAEPAPPAA. 2 stretches are compositionally biased toward low complexity: residues 96–107 and 121–136; these read PEVVAAPEAPVA and PEAPAAERPAAQARPA. A compositionally biased stretch (basic and acidic residues) spans 146 to 155; it reads AAEKPADTRT. Composition is skewed to gly residues over residues 171–192 and 206–234; these read RPGGQGGPRPGGPRPSGGGGPR and RPGGSGAAGPRPGGTGAAGPRPGGSGQGG. The segment covering 235–254 has biased composition (low complexity); the sequence is SRPSPGMMPGRSAVGRPGAP. Over residues 255 to 320 the composition is skewed to gly residues; sequence ARGGSGGPGG…GTQGAFGRAG (66 aa). The span at 324–333 shows a compositional bias: basic residues; the sequence is VRARKSRRAK. The tr-type G domain maps to 448–619; it reads ARPPVVTVMG…AVLLTADAAL (172 aa). The interval 457–464 is G1; the sequence is GHVDHGKT. Residue 457 to 464 participates in GTP binding; that stretch reads GHVDHGKT. Residues 482–486 are G2; the sequence is GITQH. The tract at residues 507 to 510 is G3; sequence DTPG. GTP contacts are provided by residues 507-511 and 561-564; these read DTPGH and NKVD. The interval 561 to 564 is G4; that stretch reads NKVD. Positions 597 to 599 are G5; sequence SAK.

The protein belongs to the TRAFAC class translation factor GTPase superfamily. Classic translation factor GTPase family. IF-2 subfamily.

The protein resides in the cytoplasm. Its function is as follows. One of the essential components for the initiation of protein synthesis. Protects formylmethionyl-tRNA from spontaneous hydrolysis and promotes its binding to the 30S ribosomal subunits. Also involved in the hydrolysis of GTP during the formation of the 70S ribosomal complex. This Beutenbergia cavernae (strain ATCC BAA-8 / DSM 12333 / CCUG 43141 / JCM 11478 / NBRC 16432 / NCIMB 13614 / HKI 0122) protein is Translation initiation factor IF-2.